We begin with the raw amino-acid sequence, 274 residues long: HMP-PP phosphatase (274 aa).

Residue Asp-8 is the Nucleophile of the active site. Residues Asp-8, Asp-10, and Asp-213 each coordinate Mg(2+).

It belongs to the HAD-like hydrolase superfamily. Cof family. Requires Mg(2+) as cofactor.

It carries out the reaction 4-amino-2-methyl-5-(diphosphooxymethyl)pyrimidine + H2O = 4-amino-2-methyl-5-(phosphooxymethyl)pyrimidine + phosphate + H(+). Functionally, catalyzes the hydrolysis of 4-amino-2-methyl-5-hydroxymethylpyrimidine pyrophosphate (HMP-PP) to 4-amino-2-methyl-5-hydroxymethylpyrimidine phosphate (HMP-P). The chain is HMP-PP phosphatase from Serratia proteamaculans (strain 568).